A 172-amino-acid chain; its full sequence is MNINRDKIVQLVDTDTIENLTSALSQRLIADQLRLTTAESCTGGKLASALCAAEDTPKFYGAGFVTFTDQAKMKILSVSQQSLERYSAVSEKVAAEMATGAIERADADVSIAITGYGGPEGGEDGTPAGTVWFAWHIKGQNYTAVMHFAGDCETVLALAVRFALAQLLQLLL.

The protein belongs to the CinA family.

In terms of biological role, does not have nicotinamide-nucleotide (NMN) amidohydrolase activity. This Escherichia coli (strain K12) protein is Protein YdeJ (ydeJ).